A 225-amino-acid chain; its full sequence is MKQLLQDSWWNQLKEEFEKPYYQELREMLKREYAEQTIYPDSRDIFNALHYTSYDDVKVVILGQDPYHGPGQAQGLSFSVKPGVKQPPSLKNIFLELQQDIGCSIPNHGSLVSWAKQGVLLLNTVLTVRRGQANSHKGKGWERLTDRIIDVLSERERPVIFILWGRHAQMKKERIDTSKHFIIESTHPSPFSARNGFFGSRPFSRANAYLEKMGEAPIDWCIKDL.

Catalysis depends on Asp-65, which acts as the Proton acceptor.

It belongs to the uracil-DNA glycosylase (UDG) superfamily. UNG family. In terms of assembly, interacts with bacillus phage phi29 protein p56; this interaction inhibits the uracil-DNA glycosylase. Interacts with SSB (ssbA).

Its subcellular location is the cytoplasm. It catalyses the reaction Hydrolyzes single-stranded DNA or mismatched double-stranded DNA and polynucleotides, releasing free uracil.. In terms of biological role, excises uracil residues from the DNA which can arise as a result of misincorporation of dUMP residues by DNA polymerase or due to deamination of cytosine. This Bacillus subtilis (strain 168) protein is Uracil-DNA glycosylase (ung).